Reading from the N-terminus, the 339-residue chain is N-acetyl-gamma-glutamyl-phosphate reductase (339 aa).

Cys-145 is an active-site residue.

The protein belongs to the NAGSA dehydrogenase family. Type 1 subfamily.

The protein localises to the cytoplasm. The enzyme catalyses N-acetyl-L-glutamate 5-semialdehyde + phosphate + NADP(+) = N-acetyl-L-glutamyl 5-phosphate + NADPH + H(+). Its pathway is amino-acid biosynthesis; L-arginine biosynthesis; N(2)-acetyl-L-ornithine from L-glutamate: step 3/4. Catalyzes the NADPH-dependent reduction of N-acetyl-5-glutamyl phosphate to yield N-acetyl-L-glutamate 5-semialdehyde. The chain is N-acetyl-gamma-glutamyl-phosphate reductase from Thermotoga petrophila (strain ATCC BAA-488 / DSM 13995 / JCM 10881 / RKU-1).